The primary structure comprises 384 residues: FAD-dependent urate hydroxylase (384 aa).

Residues Gly11, 30 to 31, Ser43, and Val125 contribute to the FAD site; that span reads EA. Residues Asn178, Arg204, and 216-218 each bind substrate; that span reads YFF. FAD is bound by residues Asp285 and 295–299; that span reads GQGGC.

The protein belongs to the FAD-dependent urate hydroxylase family. FAD is required as a cofactor.

It carries out the reaction urate + NADH + O2 + H(+) = 5-hydroxyisourate + NAD(+) + H2O. It participates in purine metabolism; urate degradation. In terms of biological role, catalyzes the hydroxylation of uric acid to 5-hydroxyisourate. The protein is FAD-dependent urate hydroxylase (hpxO) of Klebsiella oxytoca.